The following is a 343-amino-acid chain: Ribosomal RNA small subunit methyltransferase C (343 aa).

It belongs to the methyltransferase superfamily. RsmC family. Monomer.

It localises to the cytoplasm. It carries out the reaction guanosine(1207) in 16S rRNA + S-adenosyl-L-methionine = N(2)-methylguanosine(1207) in 16S rRNA + S-adenosyl-L-homocysteine + H(+). Its function is as follows. Specifically methylates the guanine in position 1207 of 16S rRNA in the 30S particle. The sequence is that of Ribosomal RNA small subunit methyltransferase C from Escherichia coli O81 (strain ED1a).